The chain runs to 417 residues: MADIKNYTLNFGPQHPAAHGVLRLVLELDGEVIQRADPHIGLLHRATEKLAEQKTWIQSVPYMDRLDYVSMMVNEHAYVMAIERLLGLEVPVRAQYIRVMFDEITRLLNHLMWIGSHALDVGAMAVFLYAFREREDMFDMYEAVSGARMHAAYYRPGGVYRDLPDTMPQYRASKVHNERAIKAMNEARSGSLLDFIEDFTNRFPKYVDEYETLLTDNRIWKQRLVDIGVVSPERALQMGFTGPMLRGSGIAWDLRKKQPYEVYDKLDFDVPVGVGGDCYARYLVRVEEMRQSNRIIKQCVDWLRRNPGPVITENHKVAPPSRVDMKSNMEELIHHFKLFTEGIHVPEGEAYAAVEHPKGEFGIYAISDGANKPYRLKIRAPGFAHLAALDEMAKGHMIADAVTIIGTQDIVFGEIDR.

The protein belongs to the complex I 49 kDa subunit family. NDH-1 is composed of 14 different subunits. Subunits NuoB, C, D, E, F, and G constitute the peripheral sector of the complex.

The protein localises to the cell inner membrane. The catalysed reaction is a quinone + NADH + 5 H(+)(in) = a quinol + NAD(+) + 4 H(+)(out). In terms of biological role, NDH-1 shuttles electrons from NADH, via FMN and iron-sulfur (Fe-S) centers, to quinones in the respiratory chain. The immediate electron acceptor for the enzyme in this species is believed to be ubiquinone. Couples the redox reaction to proton translocation (for every two electrons transferred, four hydrogen ions are translocated across the cytoplasmic membrane), and thus conserves the redox energy in a proton gradient. The chain is NADH-quinone oxidoreductase subunit D from Cupriavidus taiwanensis (strain DSM 17343 / BCRC 17206 / CCUG 44338 / CIP 107171 / LMG 19424 / R1) (Ralstonia taiwanensis (strain LMG 19424)).